Here is a 390-residue protein sequence, read N- to C-terminus: Neutrophil cytosol factor 1 (390 aa).

The PX domain occupies 4–125; it reads TFIRHIALLG…DFFKVRPDDL (122 aa). SH3 domains are found at residues 156 to 215 and 226 to 285; these read IILQ…PLDS and YAGE…KSGQ. The disordered stretch occupies residues 285-390; the sequence is QDVSQAQRQI…STKRKLASAV (106 aa). 2 positions are modified to phosphoserine: Ser-303 and Ser-304. Residues 309 to 318 are compositionally biased toward basic residues; the sequence is HSIHQRSRKR. A phosphoserine mark is found at Ser-320, Ser-328, Ser-345, and Ser-348.

As to quaternary structure, component of the phagocyte NADPH oxidase complex composed of an obligatory core heterodimer formed by the membrane proteins CYBA and CYBB and the cytosolic regulatory subunits NCF1/p47-phox, NCF2/p67-phox, NCF4/p40-phox and the small GTPase RAC1 or RAC2. Part of a cytosolic complex composed at least by NCF1, NCF2 and NCF4. Interacts (via C-terminus) with NCF2 (via the C-terminal SH3 domain). Interacts with NCF4. Interacts with CYBB. Interacts (via the second SH3 domain) with CYBA; interaction is phosphorylation-dependent. Interacts with NOXA1. Interacts with ADAM15. Interacts with TRAF4. Interacts with FASLG. Interacts with PARK7 (via C-terminus); the interaction is enhanced by LPS and modulates NCF1 phosphorylation and membrane translocation. Post-translationally, phosphorylated by PRKCD; phosphorylation induces activation of NCF1, leading to assembly and activation of the NADPH oxidase complex. As to expression, detected in peripheral blood monocytes and neutrophils (at protein level).

The protein resides in the cytoplasm. Its subcellular location is the cytosol. It is found in the membrane. Its function is as follows. Subunit of the phagocyte NADPH oxidase complex that mediates the transfer of electrons from cytosolic NADPH to O2 to produce the superoxide anion (O2(-)). In the activated complex, electrons are first transferred from NADPH to flavin adenine dinucleotide (FAD) and subsequently transferred via two heme molecules to molecular oxygen, producing superoxide through an outer-sphere reaction. Activation of the NADPH oxidase complex is initiated by the assembly of cytosolic subunits of the NADPH oxidase complex with the core NADPH oxidase complex to form a complex at the plasma membrane or phagosomal membrane. This activation process is initiated by phosphorylation dependent binding of the cytosolic NCF1/p47-phox subunit to the C-terminus of CYBA/p22-phox. The polypeptide is Neutrophil cytosol factor 1 (Homo sapiens (Human)).